The sequence spans 85 residues: Large ribosomal subunit protein bL27 (85 aa).

This sequence belongs to the bacterial ribosomal protein bL27 family.

The chain is Large ribosomal subunit protein bL27 from Persephonella marina (strain DSM 14350 / EX-H1).